A 244-amino-acid chain; its full sequence is NAD(P)H-hydrate epimerase (244 aa).

Residues isoleucine 35 to arginine 240 form the YjeF N-terminal domain. Position 82-86 (asparagine 82–aspartate 86) interacts with (6S)-NADPHX. K(+) contacts are provided by asparagine 83 and aspartate 150. (6S)-NADPHX contacts are provided by residues glycine 154–proline 160, tyrosine 165, and aspartate 183. Residue threonine 186 coordinates K(+).

The protein belongs to the NnrE/AIBP family. It depends on K(+) as a cofactor.

The enzyme catalyses (6R)-NADHX = (6S)-NADHX. It catalyses the reaction (6R)-NADPHX = (6S)-NADPHX. Its function is as follows. Catalyzes the epimerization of the S- and R-forms of NAD(P)HX, a damaged form of NAD(P)H that is a result of enzymatic or heat-dependent hydration. This is a prerequisite for the S-specific NAD(P)H-hydrate dehydratase to allow the repair of both epimers of NAD(P)HX. This is NAD(P)H-hydrate epimerase from Rhodopirellula baltica (strain DSM 10527 / NCIMB 13988 / SH1).